The chain runs to 385 residues: Chaperone protein DnaJ (385 aa).

A J domain is found at 5–70 (DYYEVLGVSK…ERKAAYDRYG (66 aa)). The CR-type zinc finger occupies 143–221 (GLHKTINVPT…CNGHGRVEKD (79 aa)). 8 residues coordinate Zn(2+): cysteine 156, cysteine 159, cysteine 173, cysteine 176, cysteine 195, cysteine 198, cysteine 209, and cysteine 212. CXXCXGXG motif repeat units lie at residues 156–163 (CTSCEGTG), 173–180 (CPTCSGMG), 195–202 (CPTCSGLG), and 209–216 (CKTCNGHG).

Belongs to the DnaJ family. As to quaternary structure, homodimer. Zn(2+) serves as cofactor.

It is found in the cytoplasm. In terms of biological role, participates actively in the response to hyperosmotic and heat shock by preventing the aggregation of stress-denatured proteins and by disaggregating proteins, also in an autonomous, DnaK-independent fashion. Unfolded proteins bind initially to DnaJ; upon interaction with the DnaJ-bound protein, DnaK hydrolyzes its bound ATP, resulting in the formation of a stable complex. GrpE releases ADP from DnaK; ATP binding to DnaK triggers the release of the substrate protein, thus completing the reaction cycle. Several rounds of ATP-dependent interactions between DnaJ, DnaK and GrpE are required for fully efficient folding. Also involved, together with DnaK and GrpE, in the DNA replication of plasmids through activation of initiation proteins. In Ruegeria sp. (strain TM1040) (Silicibacter sp.), this protein is Chaperone protein DnaJ.